The sequence spans 201 residues: Holliday junction branch migration complex subunit RuvA (201 aa).

Residues 1 to 63 are domain I; it reads MIAYLSGVVR…EDAQLLFGFP (63 aa). The interval 64-142 is domain II; sequence DADHLKLFDL…EHLAAAASGA (79 aa). The tract at residues 143 to 150 is flexible linker; the sequence is AGGKRPAR. Positions 151–201 are domain III; that stretch reads VSSTAGHDAVDALLALGFREAQVRAAVAELLGADPEASADTLIRKALGRLR.

This sequence belongs to the RuvA family. In terms of assembly, homotetramer. Forms an RuvA(8)-RuvB(12)-Holliday junction (HJ) complex. HJ DNA is sandwiched between 2 RuvA tetramers; dsDNA enters through RuvA and exits via RuvB. An RuvB hexamer assembles on each DNA strand where it exits the tetramer. Each RuvB hexamer is contacted by two RuvA subunits (via domain III) on 2 adjacent RuvB subunits; this complex drives branch migration. In the full resolvosome a probable DNA-RuvA(4)-RuvB(12)-RuvC(2) complex forms which resolves the HJ.

It localises to the cytoplasm. In terms of biological role, the RuvA-RuvB-RuvC complex processes Holliday junction (HJ) DNA during genetic recombination and DNA repair, while the RuvA-RuvB complex plays an important role in the rescue of blocked DNA replication forks via replication fork reversal (RFR). RuvA specifically binds to HJ cruciform DNA, conferring on it an open structure. The RuvB hexamer acts as an ATP-dependent pump, pulling dsDNA into and through the RuvAB complex. HJ branch migration allows RuvC to scan DNA until it finds its consensus sequence, where it cleaves and resolves the cruciform DNA. In Deinococcus radiodurans (strain ATCC 13939 / DSM 20539 / JCM 16871 / CCUG 27074 / LMG 4051 / NBRC 15346 / NCIMB 9279 / VKM B-1422 / R1), this protein is Holliday junction branch migration complex subunit RuvA.